We begin with the raw amino-acid sequence, 950 residues long: Bifunctional glutamine synthetase adenylyltransferase/adenylyl-removing enzyme (950 aa).

The adenylyl removase stretch occupies residues 1 to 443; that stretch reads MSLPSPLLPV…VFVTLIGDEE (443 aa). The adenylyl transferase stretch occupies residues 450–950; that stretch reads ERHFNELWDM…WQEWLESSTI (501 aa).

It belongs to the GlnE family. The cofactor is Mg(2+).

It carries out the reaction [glutamine synthetase]-O(4)-(5'-adenylyl)-L-tyrosine + phosphate = [glutamine synthetase]-L-tyrosine + ADP. The catalysed reaction is [glutamine synthetase]-L-tyrosine + ATP = [glutamine synthetase]-O(4)-(5'-adenylyl)-L-tyrosine + diphosphate. In terms of biological role, involved in the regulation of glutamine synthetase GlnA, a key enzyme in the process to assimilate ammonia. When cellular nitrogen levels are high, the C-terminal adenylyl transferase (AT) inactivates GlnA by covalent transfer of an adenylyl group from ATP to specific tyrosine residue of GlnA, thus reducing its activity. Conversely, when nitrogen levels are low, the N-terminal adenylyl removase (AR) activates GlnA by removing the adenylyl group by phosphorolysis, increasing its activity. The regulatory region of GlnE binds the signal transduction protein PII (GlnB) which indicates the nitrogen status of the cell. This is Bifunctional glutamine synthetase adenylyltransferase/adenylyl-removing enzyme from Vibrio vulnificus (strain YJ016).